The primary structure comprises 222 residues: UPF0758 protein HSM_0009 (222 aa).

One can recognise an MPN domain in the interval glutamine 99–isoleucine 222. Residues histidine 171, histidine 173, and aspartate 184 each contribute to the Zn(2+) site. The JAMM motif motif lies at histidine 171–aspartate 184.

The protein belongs to the UPF0758 family.

The sequence is that of UPF0758 protein HSM_0009 from Histophilus somni (strain 2336) (Haemophilus somnus).